Reading from the N-terminus, the 152-residue chain is Dimethylsulfoniopropionate lyase DddW (152 aa).

A Cupin type-2 domain is found at 69–124; the sequence is IAEFGPGHQLRPHRHTPPEFYLGLEGSGIVTIDGVPHEIRAGVALYIPGDAEHGTV. Fe cation-binding residues include H83, E87, Y89, and H121.

Belongs to the non-heme iron-dependent dioxygenase family. As to quaternary structure, homodimer. Fe(2+) serves as cofactor.

It catalyses the reaction S,S-dimethyl-beta-propiothetin = acrylate + dimethyl sulfide + H(+). Functionally, able to cleave dimethylsulfoniopropionate (DMSP), releasing dimethyl sulfide (DMS) and acrylate. DMS is the principal form by which sulfur is transported from oceans to the atmosphere. The polypeptide is Dimethylsulfoniopropionate lyase DddW (Ruegeria pomeroyi (strain ATCC 700808 / DSM 15171 / DSS-3) (Silicibacter pomeroyi)).